Reading from the N-terminus, the 568-residue chain is Malate synthase, glyoxysomal (568 aa).

The interval Met-1–Gly-20 is disordered. Arg-183 acts as the Proton acceptor in catalysis. Catalysis depends on Asp-469, which acts as the Proton donor. Positions Ser-566 to Leu-568 match the Microbody targeting signal motif.

The protein belongs to the malate synthase family.

It is found in the glyoxysome. The enzyme catalyses glyoxylate + acetyl-CoA + H2O = (S)-malate + CoA + H(+). Its pathway is carbohydrate metabolism; glyoxylate cycle; (S)-malate from isocitrate: step 2/2. This Cucumis sativus (Cucumber) protein is Malate synthase, glyoxysomal.